The primary structure comprises 266 residues: Phosphatidylglycerol--prolipoprotein diacylglyceryl transferase (266 aa).

The next 7 membrane-spanning stretches (helical) occupy residues 10-30 (VALAIGPLKIHWYGLMYLIGI), 56-76 (LVFWVACGVILGGRLGYVLFY), 92-112 (WKGGMSFHGGLLGVMLAVWWF), 120-140 (FFQLMDFIAPLVPIGLGAGRI), 171-191 (PSQLYQFALEGVALFVILWLF), 199-219 (ASVSGLFVLCYGIFRFVVEFV), and 233-253 (WLTMGQVLCVPMVLAGIALMV). Residue Arg139 coordinates a 1,2-diacyl-sn-glycero-3-phospho-(1'-sn-glycerol).

This sequence belongs to the Lgt family.

It localises to the cell inner membrane. The enzyme catalyses L-cysteinyl-[prolipoprotein] + a 1,2-diacyl-sn-glycero-3-phospho-(1'-sn-glycerol) = an S-1,2-diacyl-sn-glyceryl-L-cysteinyl-[prolipoprotein] + sn-glycerol 1-phosphate + H(+). It functions in the pathway protein modification; lipoprotein biosynthesis (diacylglyceryl transfer). Catalyzes the transfer of the diacylglyceryl group from phosphatidylglycerol to the sulfhydryl group of the N-terminal cysteine of a prolipoprotein, the first step in the formation of mature lipoproteins. The protein is Phosphatidylglycerol--prolipoprotein diacylglyceryl transferase of Pseudomonas paraeruginosa (strain DSM 24068 / PA7) (Pseudomonas aeruginosa (strain PA7)).